Consider the following 204-residue polypeptide: Rho GDP-dissociation inhibitor 1 (204 aa).

A disordered region spans residues 1–36; the sequence is MAEQEPTAEQLAQIAAENEEDEHSVNYKPPAQKSIQ. A2 is modified (N-acetylalanine). Residue S34 is modified to Phosphoserine. At K43 the chain carries N6-acetyllysine. S47 carries the phosphoserine modification. An N6-acetyllysine mark is found at K105 and K127. Residues K138 and K141 each participate in a glycyl lysine isopeptide (Lys-Gly) (interchain with G-Cter in SUMO1); alternate cross-link. Residues K138 and K141 each participate in a glycyl lysine isopeptide (Lys-Gly) (interchain with G-Cter in SUMO2); alternate cross-link. K141 carries the N6-acetyllysine; alternate modification. K141 carries the N6-succinyllysine; alternate modification. K178 carries the N6-acetyllysine modification.

Belongs to the Rho GDI family. In terms of assembly, monomer. Interacts with FER. Interacts with PLXNB3. Forms a heterodimer with RAC1. Interacts with RHOA, the affinity is increased by three orders of magnitude when RHOA is prenylated. Interacts with PSMD10; the interaction increases ARHGDIA association with RHOA, leading to ARHGDIA-mediated inactivation of RHOA and ROCK and prolonged AKT activation. Interacts with KANK2; the interaction is direct and may regulate the interaction of ARHGDIA with RHOA, RAC1 and CDC42. Interacts with RHOC. Interacts with CDC42. Interacts with NGFR (via death domain); NGFR binding decreases the affinity for RHOA.

The protein resides in the cytoplasm. In terms of biological role, controls Rho proteins homeostasis. Regulates the GDP/GTP exchange reaction of the Rho proteins by inhibiting the dissociation of GDP from them, and the subsequent binding of GTP to them. Retains Rho proteins such as CDC42, RAC1 and RHOA in an inactive cytosolic pool, regulating their stability and protecting them from degradation. Actively involved in the recycling and distribution of activated Rho GTPases in the cell, mediates extraction from membranes of both inactive and activated molecules due its exceptionally high affinity for prenylated forms. Through the modulation of Rho proteins, may play a role in cell motility regulation. In glioma cells, inhibits cell migration and invasion by mediating the signals of SEMA5A and PLXNB3 that lead to inactivation of RAC1. The polypeptide is Rho GDP-dissociation inhibitor 1 (ARHGDIA) (Homo sapiens (Human)).